Reading from the N-terminus, the 133-residue chain is Fatty acid-binding protein, heart (133 aa).

Ala-2 carries the N-acetylalanine modification. Thr-8 is subject to Phosphothreonine. Tyr-20 carries the post-translational modification Phosphotyrosine; by Tyr-kinases. Residue Ser-23 is modified to Phosphoserine. Position 30 is a phosphothreonine (Thr-30). Ser-83 carries the phosphoserine modification. 127-129 (RTY) is a (9Z)-octadecenoate binding site. 127–129 (RTY) is a binding site for hexadecanoate. Residue 127–129 (RTY) coordinates octadecanoate.

As to expression, heart, but also skeletal muscle, kidney, brain and mammary gland.

It localises to the cytoplasm. Functionally, FABPs are thought to play a role in the intracellular transport of long-chain fatty acids and their acyl-CoA esters. This chain is Fatty acid-binding protein, heart (Fabp3), found in Rattus norvegicus (Rat).